We begin with the raw amino-acid sequence, 319 residues long: Taste receptor type 2 member 30 (319 aa).

A topological domain (extracellular) is located at residue Met-1. Residues 2–22 (ITFLPIIFSILIVVIFVIGNF) form a helical membrane-spanning segment. Over 23-46 (ANGFIALVNSIEWVKRQKISFVDQ) the chain is Cytoplasmic. A helical membrane pass occupies residues 47-67 (ILTALAVSRVGLLWVLLLHWY). Residues 68–86 (ATQLNPAFYSVEVRITVYN) lie on the Extracellular side of the membrane. A helical transmembrane segment spans residues 87 to 107 (VWAVTNHFSSWLATSLSMFYL). Over 108–126 (LKIANFSNLIFLRIKRRVK) the chain is Cytoplasmic. A helical membrane pass occupies residues 127 to 147 (SVVLVILLGPLLFLVCHLFVI). Topologically, residues 148–178 (NMDETIWTKEYEGNMTWKIKLRSAMYHSNMT) are extracellular. Residues Asn-161 and Asn-176 are each glycosylated (N-linked (GlcNAc...) asparagine). A helical transmembrane segment spans residues 179–199 (LTMLANFVPLTLTLISFLLLI). The Cytoplasmic segment spans residues 200 to 229 (CSLCKHLKKMQLHGKGSQDPSTKVHIKALQ). Residues 230-250 (TVTSFLLLCAIYFLSMIISVC) form a helical membrane-spanning segment. The Extracellular segment spans residues 251–259 (NLGRLEKQP). Residues 260-280 (VFMFCQAIIFSYPSTHPFILI) traverse the membrane as a helical segment. At 281–319 (LGNKKLKQIFLSVLWHVRYWVKDRSLRLHRFTRAALCKG) the chain is on the cytoplasmic side.

The protein belongs to the G-protein coupled receptor T2R family.

The protein resides in the membrane. Functionally, receptor that may play a role in the perception of bitterness and is gustducin-linked. May play a role in sensing the chemical composition of the gastrointestinal content. The activity of this receptor may stimulate alpha gustducin, mediate PLC-beta-2 activation and lead to the gating of TRPM5. In Pan troglodytes (Chimpanzee), this protein is Taste receptor type 2 member 30 (TAS2R30).